Reading from the N-terminus, the 271-residue chain is tRNA pseudouridine synthase A (271 aa).

The active-site Nucleophile is the aspartate 52. A substrate-binding site is contributed by tyrosine 110.

The protein belongs to the tRNA pseudouridine synthase TruA family. Homodimer.

It carries out the reaction uridine(38/39/40) in tRNA = pseudouridine(38/39/40) in tRNA. Its function is as follows. Formation of pseudouridine at positions 38, 39 and 40 in the anticodon stem and loop of transfer RNAs. The protein is tRNA pseudouridine synthase A of Maridesulfovibrio salexigens (strain ATCC 14822 / DSM 2638 / NCIMB 8403 / VKM B-1763) (Desulfovibrio salexigens).